The sequence spans 83 residues: U5-theraphotoxin-Hs1d (83 aa).

A signal peptide spans 1–21; it reads MKTSMFLTLTGLVLLFVVCYA. Residues 22 to 49 constitute a propeptide that is removed on maturation; it reads SESEEKEFPKELLSSIFAADSDFKVEER. Intrachain disulfides connect Cys-51/Cys-63, Cys-56/Cys-68, and Cys-62/Cys-75.

This sequence belongs to the neurotoxin 10 (Hwtx-1) family. 51 (Hntx-8) subfamily. Hntx-8 sub-subfamily. Expressed by the venom gland.

The protein localises to the secreted. Functionally, agglutinates erythrocytes. This Cyriopagopus schmidti (Chinese bird spider) protein is U5-theraphotoxin-Hs1d.